We begin with the raw amino-acid sequence, 525 residues long: tRNA-splicing endonuclease subunit Sen54 (525 aa).

N-acetylmethionine is present on Met-1. The segment at 1–46 (MEPEPEPGSVEVPAGRVLSASELRAARSRSQKLPQRSHGPKDFLPD) is disordered. The span at 7 to 23 (PGSVEVPAGRVLSASEL) shows a compositional bias: low complexity. Residue Ser-178 is modified to Phosphoserine. At Tyr-180 the chain carries Phosphotyrosine. Low complexity predominate over residues 220–232 (LPPVSLAASSSPA). Positions 220–273 (LPPVSLAASSSPACDQSSQYPEEKSQDSSPRQGSELPLQFLGSSEPCSDLARED) are disordered.

The protein belongs to the SEN54 family. In terms of assembly, tRNA splicing endonuclease is a heterotetramer composed of TSEN2, TSEN15, TSEN34/LENG5 and TSEN54. tRNA splicing endonuclease complex also contains proteins of the pre-mRNA 3'-end processing machinery such as CLP1, CPSF1, CPSF4 and CSTF2.

It is found in the nucleus. It localises to the nucleolus. Functionally, non-catalytic subunit of the tRNA-splicing endonuclease complex, a complex responsible for identification and cleavage of the splice sites in pre-tRNA. It cleaves pre-tRNA at the 5' and 3' splice sites to release the intron. The products are an intron and two tRNA half-molecules bearing 2',3' cyclic phosphate and 5'-OH termini. There are no conserved sequences at the splice sites, but the intron is invariably located at the same site in the gene, placing the splice sites an invariant distance from the constant structural features of the tRNA body. The tRNA splicing endonuclease is also involved in mRNA processing via its association with pre-mRNA 3'-end processing factors, establishing a link between pre-tRNA splicing and pre-mRNA 3'-end formation, suggesting that the endonuclease subunits function in multiple RNA-processing events. The polypeptide is tRNA-splicing endonuclease subunit Sen54 (Tsen54) (Mus musculus (Mouse)).